Here is a 716-residue protein sequence, read N- to C-terminus: Exocyst complex component 8 (716 aa).

Phosphoserine is present on Ser15. A compositionally biased stretch (low complexity) spans 110-119 (STGEDTAGAG). Positions 110 to 149 (STGEDTAGAGPRERGAAQAGFLPGPAGVPREGPGTGEEGK) are disordered. The PH domain maps to 173 to 273 (YLVYNGDLVE…WLEVLEETKR (101 aa)). Over residues 275–284 (LSDKRRREQE) the composition is skewed to basic and acidic residues. Positions 275-319 (LSDKRRREQEEAAALRAPPPVTSKGSNPFEDEAEEELATPEAEEE) are disordered. Residues 303–319 (FEDEAEEELATPEAEEE) are compositionally biased toward acidic residues. Thr313 carries the post-translational modification Phosphothreonine.

This sequence belongs to the EXO84 family. As to quaternary structure, the exocyst complex is composed of EXOC1, EXOC2, EXOC3, EXOC4, EXOC5, EXOC6, EXOC7 and EXOC8. Interacts (via PH domain) with GTP-bound RALA and RALB. Interacts with SH3BP1; required for the localization of both SH3BP1 and the exocyst to the leading edge of migrating cells.

It is found in the cytoplasm. Its subcellular location is the perinuclear region. The protein localises to the cell projection. The protein resides in the growth cone. Component of the exocyst complex involved in the docking of exocytic vesicles with fusion sites on the plasma membrane. This Rattus norvegicus (Rat) protein is Exocyst complex component 8 (Exoc8).